A 1345-amino-acid chain; its full sequence is DNA-directed RNA polymerase subunit beta' (1345 aa).

Zn(2+) is bound by residues cysteine 60, cysteine 62, cysteine 75, and cysteine 78. Residues aspartate 536, aspartate 538, and aspartate 540 each coordinate Mg(2+). Zn(2+) contacts are provided by cysteine 895, cysteine 974, cysteine 981, and cysteine 984. Positions 1325–1345 (DDNDNPVDFGDEFRIDPDELK) are disordered. Residues 1335–1345 (DEFRIDPDELK) show a composition bias toward basic and acidic residues.

It belongs to the RNA polymerase beta' chain family. In terms of assembly, the RNAP catalytic core consists of 2 alpha, 1 beta, 1 beta' and 1 omega subunit. When a sigma factor is associated with the core the holoenzyme is formed, which can initiate transcription. The cofactor is Mg(2+). It depends on Zn(2+) as a cofactor.

It catalyses the reaction RNA(n) + a ribonucleoside 5'-triphosphate = RNA(n+1) + diphosphate. Functionally, DNA-dependent RNA polymerase catalyzes the transcription of DNA into RNA using the four ribonucleoside triphosphates as substrates. The protein is DNA-directed RNA polymerase subunit beta' of Bifidobacterium animalis subsp. lactis (strain AD011).